The chain runs to 521 residues: FAD-dependent monooxygenase mdpD (521 aa).

The interval 1–48 (MTHFPVNIASDKQEFDPERWAKTPTTESSVNGENGTAPTSGLPSRHPS) is disordered. Over residues 11-21 (DKQEFDPERWA) the composition is skewed to basic and acidic residues. A compositionally biased stretch (polar residues) spans 23-48 (TPTTESSVNGENGTAPTSGLPSRHPS). Positions 94 and 160 each coordinate FAD. Catalysis depends on residues R244 and Y271. 2 residues coordinate FAD: D369 and G382.

This sequence belongs to the paxM FAD-dependent monooxygenase family. The cofactor is FAD.

It participates in secondary metabolite biosynthesis. In terms of biological role, FAD-dependent monooxygenase; part of the gene cluster that mediates the biosynthesis of monodictyphenone, a prenyl xanthone derivative. The pathway begins with the synthesis of atrochrysone thioester by the polyketide synthase (PKS) mdpG. The atrochrysone carboxyl ACP thioesterase mdpF then breaks the thioester bond and releases the atrochrysone carboxylic acid from mdpG. The atrochrysone carboxylic acid is then converted to atrochrysone which is further transformed into emodin anthrone. The next step is performed by the anthrone oxygenase mdpH that catalyzes the oxidation of emodinanthrone to emodin. Emodin is further modified to yield monodictyphenone via several steps involving mdpB, mdpC mdpJ, mdpK and mdpL. These enzymes with xptA, xptB and xptC are also proposed to be involved in the synthesis of shamixanthone from emodin. Especially, direct reduction of emodin by the short chain dehydrogenase mdpC followed by dehydration catalyzed by the scytalone dehydratase-like protein mdpB gives loss of oxygen and formation of chrysophanol intermediate in two simple steps. This chain is FAD-dependent monooxygenase mdpD, found in Emericella nidulans (strain FGSC A4 / ATCC 38163 / CBS 112.46 / NRRL 194 / M139) (Aspergillus nidulans).